Here is a 427-residue protein sequence, read N- to C-terminus: MLDLKQIRENPDYIQELLNRRSASNEYDLTPILDRDRQQRDIEATRTQLQARSNEIGKLIGQKMKSGINPQSEEIQALKTEGNDLKTQLSELEPQEKQLKSEIEALLLQLPNLPSESTPLGKSEADNVEVRRWGDEYLPKIEVLPHWEIAERLGILEVERAVKIAQSRFIALVGAGAALERALINFMLDCQINAGYLEVIPPVLINSDSLQGTGQLPKFAEESFKCSEDDLWLAPTAEVPVTNLYRDEIVEAEQLPIKHCAYTPCFRREAGSYGKDTRGLIRLHQFNKVELVKLVHPETSEAEHQSLVNNAEAILQALKLPYRVLELCTGDLGFGATKCYDLEVWLPSSGTYREISSCSNCGDFQARRANIRLKEKGKKGTQYVHTLNGSGLAVGRTMAAILENYQQSNGTVKVPDVLQPYLKREIL.

Thr-236–Glu-238 is a binding site for L-serine. Residue Arg-267 to Glu-269 coordinates ATP. Position 290 (Glu-290) interacts with L-serine. Glu-354–Ser-357 provides a ligand contact to ATP. Ser-390 lines the L-serine pocket.

The protein belongs to the class-II aminoacyl-tRNA synthetase family. Type-1 seryl-tRNA synthetase subfamily. Homodimer. The tRNA molecule binds across the dimer.

It is found in the cytoplasm. It catalyses the reaction tRNA(Ser) + L-serine + ATP = L-seryl-tRNA(Ser) + AMP + diphosphate + H(+). It carries out the reaction tRNA(Sec) + L-serine + ATP = L-seryl-tRNA(Sec) + AMP + diphosphate + H(+). It functions in the pathway aminoacyl-tRNA biosynthesis; selenocysteinyl-tRNA(Sec) biosynthesis; L-seryl-tRNA(Sec) from L-serine and tRNA(Sec): step 1/1. In terms of biological role, catalyzes the attachment of serine to tRNA(Ser). Is also able to aminoacylate tRNA(Sec) with serine, to form the misacylated tRNA L-seryl-tRNA(Sec), which will be further converted into selenocysteinyl-tRNA(Sec). The polypeptide is Serine--tRNA ligase (Rippkaea orientalis (strain PCC 8801 / RF-1) (Cyanothece sp. (strain PCC 8801))).